The following is a 485-amino-acid chain: Glutamyl-tRNA(Gln) amidotransferase subunit A (485 aa).

Catalysis depends on charge relay system residues lysine 79 and serine 154. Serine 178 acts as the Acyl-ester intermediate in catalysis.

It belongs to the amidase family. GatA subfamily. In terms of assembly, heterotrimer of A, B and C subunits.

It carries out the reaction L-glutamyl-tRNA(Gln) + L-glutamine + ATP + H2O = L-glutaminyl-tRNA(Gln) + L-glutamate + ADP + phosphate + H(+). Functionally, allows the formation of correctly charged Gln-tRNA(Gln) through the transamidation of misacylated Glu-tRNA(Gln) in organisms which lack glutaminyl-tRNA synthetase. The reaction takes place in the presence of glutamine and ATP through an activated gamma-phospho-Glu-tRNA(Gln). This is Glutamyl-tRNA(Gln) amidotransferase subunit A from Bacillus licheniformis (strain ATCC 14580 / DSM 13 / JCM 2505 / CCUG 7422 / NBRC 12200 / NCIMB 9375 / NCTC 10341 / NRRL NRS-1264 / Gibson 46).